Reading from the N-terminus, the 171-residue chain is Regulatory protein RecX (171 aa).

Belongs to the RecX family.

The protein localises to the cytoplasm. Modulates RecA activity. In Mycobacterium leprae (strain Br4923), this protein is Regulatory protein RecX.